Here is a 191-residue protein sequence, read N- to C-terminus: MGKVIFISGIDTDVGKTIATGIYAKKLMEQGCSVITQKMIQTGCKNIADDLLVHRKIQGIDLTEEDLQGKTCPYVFEYPCSPHLAAKRESRKIEAKIIEKSTALLAEKYDYVLLEGAGGLMVPYCEEATTLDYIQLNNYPLILVTSGKLGSINHTLLSLEACRTRGISVLSVMYNGYPEYDLLLVKKPNAI.

13 to 18 serves as a coordination point for ATP; sequence DVGKTI. Thr-17 serves as a coordination point for Mg(2+). Lys-38 is an active-site residue. Thr-42 is a binding site for substrate. Residues Asp-50 and 115–118 contribute to the ATP site; that span reads EGAG. The Mg(2+) site is built by Asp-50 and Glu-115.

The protein belongs to the dethiobiotin synthetase family. As to quaternary structure, homodimer. Requires Mg(2+) as cofactor.

It is found in the cytoplasm. The enzyme catalyses (7R,8S)-7,8-diammoniononanoate + CO2 + ATP = (4R,5S)-dethiobiotin + ADP + phosphate + 3 H(+). It participates in cofactor biosynthesis; biotin biosynthesis; biotin from 7,8-diaminononanoate: step 1/2. Catalyzes a mechanistically unusual reaction, the ATP-dependent insertion of CO2 between the N7 and N8 nitrogen atoms of 7,8-diaminopelargonic acid (DAPA, also called 7,8-diammoniononanoate) to form a ureido ring. In Haemophilus influenzae (strain ATCC 51907 / DSM 11121 / KW20 / Rd), this protein is ATP-dependent dethiobiotin synthetase BioD 2.